The chain runs to 383 residues: MGEEDIGEAVPKEQRQGWGQFLKQIATFSGDLSSLTAPSFILSPVSLVEFPAYWGEHPDEFAKISTGKDEIERMNLVLKWFIGTLKGQFTARNTSMGSEKKPLNPILGELFLGKWPDKNDRGETTLTAEQVSHHPPVTAYHIENRKAGVTLEGHCAQKTSFSGRTIQVKQVGHAILRVKLAGSDKEELYLITLPNLLIEGLWYGAPYVELTGNSYIQSTTCLLTTLSYTGKGYFSGKAHSFKATIGAGGNALYTVEGEWAGVSKYKGKSVSGGSNELFWDASTQREEVSVEAVEQQGEMESRKVWKTVAHGIRSGDFETASKDKARIENAQRQKRKDEAAAGTPHQLERFVHLDNDQEYSQLAAMFKGQPATEDGYRSKPRVH.

A compositionally biased stretch (basic and acidic residues) spans 317–339 (FETASKDKARIENAQRQKRKDEA). Positions 317 to 346 (FETASKDKARIENAQRQKRKDEAAAGTPHQ) are disordered.

It belongs to the OSBP family.

Lipid transporter involved in lipid countertransport between the Golgi complex and membranes of the endoplasmic reticulum: specifically exchanges sterol with phosphatidylinositol 4-phosphate (PI4P), delivering sterol to the Golgi in exchange for PI4P, which is degraded by the SAC1 phosphatase in the endoplasmic reticulum. The polypeptide is Protein KES1 (KES1) (Mycosarcoma maydis (Corn smut fungus)).